A 149-amino-acid polypeptide reads, in one-letter code: SsrA-binding protein (149 aa).

Residues 121 to 149 (GKKQHDKRADELDKDSKREAQRAMKERQR) are disordered. Positions 127-149 (KRADELDKDSKREAQRAMKERQR) are enriched in basic and acidic residues.

The protein belongs to the SmpB family.

Its subcellular location is the cytoplasm. Required for rescue of stalled ribosomes mediated by trans-translation. Binds to transfer-messenger RNA (tmRNA), required for stable association of tmRNA with ribosomes. tmRNA and SmpB together mimic tRNA shape, replacing the anticodon stem-loop with SmpB. tmRNA is encoded by the ssrA gene; the 2 termini fold to resemble tRNA(Ala) and it encodes a 'tag peptide', a short internal open reading frame. During trans-translation Ala-aminoacylated tmRNA acts like a tRNA, entering the A-site of stalled ribosomes, displacing the stalled mRNA. The ribosome then switches to translate the ORF on the tmRNA; the nascent peptide is terminated with the 'tag peptide' encoded by the tmRNA and targeted for degradation. The ribosome is freed to recommence translation, which seems to be the essential function of trans-translation. The sequence is that of SsrA-binding protein from Dechloromonas aromatica (strain RCB).